A 252-amino-acid chain; its full sequence is Short-chain dehydrogenase anuI (252 aa).

NADP(+)-binding residues include L18, D65, N92, Y171, K175, and T206. The Proton acceptor role is filled by Y171. Catalysis depends on Y171, which acts as the Proton donor. K175 serves as the catalytic Lowers pKa of active site Tyr.

Belongs to the short-chain dehydrogenases/reductases (SDR) family.

Highly reducing polyketide synthase; part of the gene cluster that mediates the biosynthesis of annullatin D, an alkylated aromatic polyketide with a fused dihydrobenzofuran lactone ring system that exhibits potent agonistic activities toward the cannabinoid receptors. AnuI does not seem to play a role within the pathway. The annullatin backbone 2-hydroxymethyl-3-pentylphenol is assembled from one acetyl-CoA starter unit and 5 malonyl-CoA elongation units by cooperation of the highly reducing polyketide synthase anuA, the short-chain dehydrogenase anuB and the oxidoreductase anuC, before being hydroxylated at the C-5 alkyl chain by the cytochrome P450 monooxygenase anuE to form (8S)-annullatin E. The prenyltransferase anuH subsequently installs one isoprenyl group at the benzene ring to form (8S)-annullatin J. Enzymatic or nonenzymatic dihydro-benzofuran ring formation between the prenyl and the phenolic hydroxyl groups in (8S)-annullatin J results in two diastereomers (2S,9S)-annullatin H and compound 12. The intermediate (2S,9S)-annullatin H is then converted to (2S,9S)-annullatin D by the FAD-linked oxidoreductase anuG-catalyzed five-member lactone ring formation. The isomer 12 acts as a substrate for the short-chain dehydrogenase anuF and is oxidized to (2R)-annullatin F, which is subsequently acetylated by an acetyltransferase leading to (2R)-annullatin G formation. The remaining enzymes identified within the cluster, anuD, anuI and anuJ, seem not to be involved in annullatin biosynthesis. This is Short-chain dehydrogenase anuI from Penicillium roqueforti (strain FM164).